The sequence spans 464 residues: Argininosuccinate lyase (464 aa).

This sequence belongs to the lyase 1 family. Argininosuccinate lyase subfamily.

It is found in the cytoplasm. It catalyses the reaction 2-(N(omega)-L-arginino)succinate = fumarate + L-arginine. Its pathway is amino-acid biosynthesis; L-arginine biosynthesis; L-arginine from L-ornithine and carbamoyl phosphate: step 3/3. The sequence is that of Argininosuccinate lyase from Pseudomonas fluorescens (strain ATCC BAA-477 / NRRL B-23932 / Pf-5).